The chain runs to 551 residues: Intestinal-type alkaline phosphatase 2 (551 aa).

A signal peptide spans 1-19 (MQGAWVLLLLGFRLQLSLS). Asp61 is a Mg(2+) binding site. Residues Asp61 and Ser111 each contribute to the Zn(2+) site. Ser111 (phosphoserine intermediate) is an active-site residue. An intrachain disulfide couples Cys140 to Cys202. N-linked (GlcNAc...) asparagine glycosylation occurs at Asn141. Ser174 lines the Mg(2+) pocket. Residue Glu235 participates in Ca(2+) binding. Asn241 carries N-linked (GlcNAc...) asparagine glycosylation. Ca(2+) contacts are provided by Phe288, Glu289, and Asp304. A Mg(2+)-binding site is contributed by Glu330. Zn(2+) contacts are provided by Asp335, His339, Asp376, and His377. Asn426 carries an N-linked (GlcNAc...) asparagine glycan. The cysteines at positions 485 and 492 are disulfide-linked. The tract at residues 496–537 (PPADENRPTTPVQNSTTTTTTTTTTTTTTTTTRVQNSASSLG) is disordered. The N-linked (GlcNAc...) asparagine glycan is linked to Asn509. Low complexity predominate over residues 511–527 (TTTTTTTTTTTTTTTTT). Residues 528-537 (RVQNSASSLG) are compositionally biased toward polar residues. Asn531 is lipidated: GPI-anchor amidated asparagine. The propeptide at 532–551 (SASSLGPATAPLAWHYWPRR) is removed in mature form.

This sequence belongs to the alkaline phosphatase family. As to quaternary structure, homodimer. Mg(2+) serves as cofactor. Requires Zn(2+) as cofactor. The cofactor is Ca(2+).

Its subcellular location is the cell membrane. The catalysed reaction is a phosphate monoester + H2O = an alcohol + phosphate. Alkaline phosphatase that can hydrolyze various phosphate compounds. This Rattus norvegicus (Rat) protein is Intestinal-type alkaline phosphatase 2.